The following is a 544-amino-acid chain: CTP synthase (544 aa).

The interval 1–266 (MKYIFVTGGV…GKAVEELLGL (266 aa)) is amidoligase domain. Ser12 is a binding site for CTP. Residue Ser12 coordinates UTP. ATP is bound at residue 13 to 18 (SLGKGV). Tyr53 provides a ligand contact to L-glutamine. Residue Asp70 participates in ATP binding. 2 residues coordinate Mg(2+): Asp70 and Glu140. Residues 147–149 (DIE), 187–192 (KTKPTQ), and Lys223 contribute to the CTP site. UTP contacts are provided by residues 187–192 (KTKPTQ) and Lys223. The region spanning 291 to 544 (TIAIAGKYTA…VKAALEHQQQ (254 aa)) is the Glutamine amidotransferase type-1 domain. Gly356 is an L-glutamine binding site. Residue Cys383 is the Nucleophile; for glutamine hydrolysis of the active site. Residues 384–387 (LGMQ), Glu407, and Arg467 each bind L-glutamine. Catalysis depends on residues His517 and Glu519.

Belongs to the CTP synthase family. In terms of assembly, homotetramer.

It catalyses the reaction UTP + L-glutamine + ATP + H2O = CTP + L-glutamate + ADP + phosphate + 2 H(+). The catalysed reaction is L-glutamine + H2O = L-glutamate + NH4(+). The enzyme catalyses UTP + NH4(+) + ATP = CTP + ADP + phosphate + 2 H(+). It participates in pyrimidine metabolism; CTP biosynthesis via de novo pathway; CTP from UDP: step 2/2. Its activity is regulated as follows. Allosterically activated by GTP, when glutamine is the substrate; GTP has no effect on the reaction when ammonia is the substrate. The allosteric effector GTP functions by stabilizing the protein conformation that binds the tetrahedral intermediate(s) formed during glutamine hydrolysis. Inhibited by the product CTP, via allosteric rather than competitive inhibition. Catalyzes the ATP-dependent amination of UTP to CTP with either L-glutamine or ammonia as the source of nitrogen. Regulates intracellular CTP levels through interactions with the four ribonucleotide triphosphates. The polypeptide is CTP synthase (Deinococcus radiodurans (strain ATCC 13939 / DSM 20539 / JCM 16871 / CCUG 27074 / LMG 4051 / NBRC 15346 / NCIMB 9279 / VKM B-1422 / R1)).